We begin with the raw amino-acid sequence, 200 residues long: uncharacterized protein (200 aa).

This is an uncharacterized protein from Commelina yellow mottle virus (CoYMV).